The primary structure comprises 295 residues: Protein SSO2 (295 aa).

Over 1–269 (MSNANPYENN…ARKARKNKIR (269 aa)) the chain is Cytoplasmic. Phosphoserine occurs at positions 31 and 34. A coiled-coil region spans residues 39 to 100 (AFMNKINSIN…ATDLQYQLKA (62 aa)). One can recognise a t-SNARE coiled-coil homology domain in the interval 194–256 (LAEVQARHQE…EQGVGHTNKA (63 aa)). A helical; Anchor for type IV membrane protein transmembrane segment spans residues 270-291 (CLIICFIIFAIVVVVVVVPSVV). Residues 292-295 (ETRK) lie on the Extracellular side of the membrane.

It belongs to the syntaxin family.

Its subcellular location is the membrane. Required for vesicle fusion with the plasma membrane. This chain is Protein SSO2 (SSO2), found in Saccharomyces cerevisiae (strain ATCC 204508 / S288c) (Baker's yeast).